The primary structure comprises 477 residues: MLGNIYFALASGLAARERLPEYANAVFAADFDRAYQLVDHHSSQRGKSDDYAGVLAMADASLLLECDEEAEEGFRLAQRLIRHSDDQLRVVSCRNTGWQALLRDRYAAAASCFSRMAEDDGATWTQQVEGLIGLALVHHQLGQQDASDDALRAAREAADGRSDRGWLATIDLIIYEFAVQAGIRCSNRLLEHAFWQSAEMGATLLANHGGRNGWTPTVSQGVPMPALIQRRAEYLSLLRRMADGDRAAIDPLMATLNHSRKLGSRLLMQTKVEVVLAALSGEQYDVAGRVFDQICNRETTYGARRWNFDFLYCRAKMAAQRGDAAGALKFYTTYMQDALRCLRTETVNVRRASAAVPVASRASDDVSARLSAKYRRAYRYIIENIERSDLTTREVAAHINVTERALQLAFKSAVGMSPSSVIRRMRLEGIRSDLLDSERNPSNIIDTASRWGIRSRSALVKGYRKQFNEAPSETIWR.

Residues 375–477 enclose the HTH araC/xylS-type domain; that stretch reads RRAYRYIIEN…NEAPSETIWR (103 aa). 2 DNA-binding regions (H-T-H motif) span residues 393–414 and 444–467; these read REVA…KSAV and IIDT…RKQF.

In terms of biological role, positive regulation of hypersensitive response genes involved in plant pathogenicity and partly of its own synthesis in minimal medium. The polypeptide is Regulatory protein HrpB (hrpB) (Ralstonia nicotianae (strain ATCC BAA-1114 / GMI1000) (Ralstonia solanacearum)).